The following is a 200-amino-acid chain: Superoxide dismutase [Fe] (200 aa).

Fe cation-binding residues include histidine 28, histidine 82, aspartate 165, and histidine 169.

Belongs to the iron/manganese superoxide dismutase family. Homodimer. Fe cation is required as a cofactor.

The enzyme catalyses 2 superoxide + 2 H(+) = H2O2 + O2. Its function is as follows. Destroys superoxide anion radicals which are normally produced within the cells and which are toxic to biological systems. This is Superoxide dismutase [Fe] (sodB) from Rhodobacter capsulatus (Rhodopseudomonas capsulata).